Consider the following 286-residue polypeptide: Thiazole synthase (286 aa).

The active-site Schiff-base intermediate with DXP is Lys122. 1-deoxy-D-xylulose 5-phosphate-binding positions include Gly183, 209–210 (AG), and 231–232 (NT).

It belongs to the ThiG family. In terms of assembly, homotetramer. Forms heterodimers with either ThiH or ThiS.

The protein localises to the cytoplasm. It catalyses the reaction [ThiS sulfur-carrier protein]-C-terminal-Gly-aminoethanethioate + 2-iminoacetate + 1-deoxy-D-xylulose 5-phosphate = [ThiS sulfur-carrier protein]-C-terminal Gly-Gly + 2-[(2R,5Z)-2-carboxy-4-methylthiazol-5(2H)-ylidene]ethyl phosphate + 2 H2O + H(+). Its pathway is cofactor biosynthesis; thiamine diphosphate biosynthesis. Its function is as follows. Catalyzes the rearrangement of 1-deoxy-D-xylulose 5-phosphate (DXP) to produce the thiazole phosphate moiety of thiamine. Sulfur is provided by the thiocarboxylate moiety of the carrier protein ThiS. In vitro, sulfur can be provided by H(2)S. This is Thiazole synthase from Synechococcus elongatus (strain ATCC 33912 / PCC 7942 / FACHB-805) (Anacystis nidulans R2).